We begin with the raw amino-acid sequence, 486 residues long: ATP-dependent rRNA helicase RRP3 (486 aa).

Residues 1-58 (MNGAKRRKVAQDTPRNTKPVAQEKPARAEPKPSSDEESEEESATLEEPSAEETAVDAP) form a disordered region. Basic and acidic residues predominate over residues 24–34 (KPARAEPKPSS). Acidic residues predominate over residues 35-54 (DEESEEESATLEEPSAEETA). The Q motif signature appears at 60 to 88 (KTFKDLGVNDALCEACEKLNYKYPTPIQE). A Helicase ATP-binding domain is found at 91 to 262 (IPVALQGRDI…RASLRDPVKV (172 aa)). An ATP-binding site is contributed by 104–111 (AETGSGKT). The short motif at 210-213 (DEAD) is the DEAD box element. Positions 286–434 (QKDVHLIYLI…EYPTEKEEVM (149 aa)) constitute a Helicase C-terminal domain. Basic and acidic residues-rich tracts occupy residues 451–460 (MKSFTEERGK) and 476–486 (RGRDDMDREEG). A disordered region spans residues 451–486 (MKSFTEERGKKGSTLKGGRGKKGGKRGRDDMDREEG).

This sequence belongs to the DEAD box helicase family. DDX47/RRP3 subfamily. Interacts with the SSU processome.

It is found in the nucleus. It catalyses the reaction ATP + H2O = ADP + phosphate + H(+). Functionally, ATP-dependent rRNA helicase required for pre-ribosomal RNA processing. Involved in the maturation of the 35S-pre-rRNA and to its cleavage to mature 18S rRNA. The protein is ATP-dependent rRNA helicase RRP3 of Gibberella zeae (strain ATCC MYA-4620 / CBS 123657 / FGSC 9075 / NRRL 31084 / PH-1) (Wheat head blight fungus).